The primary structure comprises 383 residues: UDP-N-acetylenolpyruvoylglucosamine reductase (383 aa).

The segment covering 1–13 (MRTRRDVPADRSG) has biased composition (basic and acidic residues). The disordered stretch occupies residues 1-26 (MRTRRDVPADRSGRSRVSRHPGLSVP). The 167-residue stretch at 49–215 (LGGPATRLLT…LRVRFELENA (167 aa)) folds into the FAD-binding PCMH-type domain. Residue Arg192 is part of the active site. Residue Ser271 is the Proton donor of the active site. Residue Glu375 is part of the active site.

This sequence belongs to the MurB family. FAD serves as cofactor.

The protein localises to the cytoplasm. The enzyme catalyses UDP-N-acetyl-alpha-D-muramate + NADP(+) = UDP-N-acetyl-3-O-(1-carboxyvinyl)-alpha-D-glucosamine + NADPH + H(+). The protein operates within cell wall biogenesis; peptidoglycan biosynthesis. Functionally, cell wall formation. The chain is UDP-N-acetylenolpyruvoylglucosamine reductase from Streptomyces coelicolor (strain ATCC BAA-471 / A3(2) / M145).